The following is a 138-amino-acid chain: Small ribosomal subunit protein uS11c (138 aa).

Residues 1–22 (MAKAIPKISSRRNGRIGSRKGA) form a disordered region. Residues 9 to 22 (SSRRNGRIGSRKGA) are compositionally biased toward basic residues.

This sequence belongs to the universal ribosomal protein uS11 family. Part of the 30S ribosomal subunit.

The protein localises to the plastid. It localises to the chloroplast. In Nicotiana tomentosiformis (Tobacco), this protein is Small ribosomal subunit protein uS11c.